Consider the following 350-residue polypeptide: UDP-3-O-acylglucosamine N-acyltransferase (350 aa).

His240 functions as the Proton acceptor in the catalytic mechanism.

Belongs to the transferase hexapeptide repeat family. LpxD subfamily. Homotrimer.

The catalysed reaction is a UDP-3-O-[(3R)-3-hydroxyacyl]-alpha-D-glucosamine + a (3R)-hydroxyacyl-[ACP] = a UDP-2-N,3-O-bis[(3R)-3-hydroxyacyl]-alpha-D-glucosamine + holo-[ACP] + H(+). Its pathway is bacterial outer membrane biogenesis; LPS lipid A biosynthesis. Catalyzes the N-acylation of UDP-3-O-acylglucosamine using 3-hydroxyacyl-ACP as the acyl donor. Is involved in the biosynthesis of lipid A, a phosphorylated glycolipid that anchors the lipopolysaccharide to the outer membrane of the cell. This chain is UDP-3-O-acylglucosamine N-acyltransferase, found in Methylobacillus flagellatus (strain ATCC 51484 / DSM 6875 / VKM B-1610 / KT).